A 305-amino-acid chain; its full sequence is Ribonuclease BN (305 aa).

Residues His-64, His-66, Asp-68, His-69, His-141, Asp-212, and His-270 each coordinate Zn(2+). Catalysis depends on Asp-68, which acts as the Proton acceptor.

The protein belongs to the RNase Z family. RNase BN subfamily. As to quaternary structure, homodimer. It depends on Zn(2+) as a cofactor.

In terms of biological role, zinc phosphodiesterase, which has both exoribonuclease and endoribonuclease activities. This Escherichia coli O81 (strain ED1a) protein is Ribonuclease BN.